A 51-amino-acid chain; its full sequence is MSRNKPVAKKFRLAKALKANSPIPIWIVLKTRGRVRYNPFRRNWRRNDLKV.

Belongs to the eukaryotic ribosomal protein eL39 family.

The sequence is that of Large ribosomal subunit protein eL39 from Saccharolobus islandicus (strain Y.N.15.51 / Yellowstone #2) (Sulfolobus islandicus).